A 447-amino-acid chain; its full sequence is Beclin-1 (447 aa).

The segment covering 44 to 53 (PPLTAAPARP) has biased composition (low complexity). Residues 44–71 (PPLTAAPARPGDAQEESALSEEAFTEGR) form a disordered region. The short motif at 105–124 (TMENLSRRLKVTGDLFDIMS) is the BH3 element. Residues 139–266 (DTLLDQLDTQ…QLDKLKKTNV (128 aa)) are a coiled coil. Residues 242–447 (DELKSVENQM…AWVSSQFYNK (206 aa)) are evolutionary conserved domain (ECD). The tract at residues 422-447 (WTKALKFMLTNLKWGLAWVSSQFYNK) is required for membrane-association.

The protein belongs to the beclin family. As to quaternary structure, component of the PI3K (PI3KC3/PI3K-III/class III phosphatidylinositol 3-kinase) complex. In terms of processing, may be proteolytically processed by caspases; the C-terminal fragment(s) may induce apoptosis.

The protein localises to the cytoplasm. The protein resides in the golgi apparatus. It is found in the trans-Golgi network membrane. It localises to the endosome membrane. Its subcellular location is the endoplasmic reticulum membrane. The protein localises to the mitochondrion membrane. The protein resides in the cytoplasmic vesicle. It is found in the autophagosome. Plays a central role in autophagy. Acts as core subunit of different PI3K complex forms that mediate formation of phosphatidylinositol 3-phosphate and are believed to play a role in multiple membrane trafficking pathways such as initiation of autophagosomes, maturation of autophagosomes and endocytosis. Involved in regulation of degradative endocytic trafficking and required for the abscission step in cytokinesis, probably in the context of PI3KC3-C2. The polypeptide is Beclin-1 (BECN1) (Gallus gallus (Chicken)).